A 293-amino-acid chain; its full sequence is ATP synthase gamma chain (293 aa).

It belongs to the ATPase gamma chain family. F-type ATPases have 2 components, CF(1) - the catalytic core - and CF(0) - the membrane proton channel. CF(1) has five subunits: alpha(3), beta(3), gamma(1), delta(1), epsilon(1). CF(0) has three main subunits: a, b and c.

The protein localises to the cell inner membrane. Produces ATP from ADP in the presence of a proton gradient across the membrane. The gamma chain is believed to be important in regulating ATPase activity and the flow of protons through the CF(0) complex. In Nitrosospira multiformis (strain ATCC 25196 / NCIMB 11849 / C 71), this protein is ATP synthase gamma chain.